Consider the following 642-residue polypeptide: Ribosome biogenesis protein BOP1 homolog (642 aa).

A disordered region spans residues 1–28 (MIHKRMNSTELERTSKKIDDYDSSDEED). Residues 10-20 (ELERTSKKIDD) are compositionally biased toward basic and acidic residues. 6 WD repeats span residues 311-351 (GHSG…CLKT), 353-393 (SLDG…DRHR), 472-510 (RLKG…LKKK), 513-552 (TGSQ…KPWK), 556-595 (HHTA…DSLK), and 612-642 (KNGL…ALFT).

Belongs to the WD repeat BOP1/ERB1 family.

It localises to the nucleus. It is found in the nucleolus. Its subcellular location is the nucleoplasm. Functionally, required for maturation of ribosomal RNAs and formation of the large ribosomal subunit. This Brugia malayi (Filarial nematode worm) protein is Ribosome biogenesis protein BOP1 homolog.